Consider the following 228-residue polypeptide: Ribulose-phosphate 3-epimerase (228 aa).

Ser-9 contacts substrate. The a divalent metal cation site is built by His-34, Asp-36, and His-70. Asp-36 functions as the Proton acceptor in the catalytic mechanism. Substrate-binding positions include His-70, 146–149 (GKGG), 175–177 (DGG), and 197–198 (GT). Asp-175 contributes to the a divalent metal cation binding site. Asp-175 serves as the catalytic Proton donor.

The protein belongs to the ribulose-phosphate 3-epimerase family. It depends on Co(2+) as a cofactor. The cofactor is Fe(2+). Requires Mn(2+) as cofactor. Zn(2+) is required as a cofactor.

The catalysed reaction is D-ribulose 5-phosphate = D-xylulose 5-phosphate. It functions in the pathway carbohydrate degradation; pentose phosphate pathway; D-xylulose 5-phosphate from D-ribulose 5-phosphate (non-oxidative stage): step 1/1. In terms of biological role, catalyzes the reversible epimerization of D-ribulose 5-phosphate to D-xylulose 5-phosphate. The protein is Ribulose-phosphate 3-epimerase of Schizosaccharomyces pombe (strain 972 / ATCC 24843) (Fission yeast).